The following is a 142-amino-acid chain: Large-conductance mechanosensitive channel (142 aa).

3 helical membrane passes run 10 to 30 (FAVK…GAFG), 40 to 60 (LIMP…LFVV), and 86 to 106 (GNFI…FMMV).

This sequence belongs to the MscL family. In terms of assembly, homopentamer.

The protein resides in the cell inner membrane. Its function is as follows. Channel that opens in response to stretch forces in the membrane lipid bilayer. May participate in the regulation of osmotic pressure changes within the cell. The chain is Large-conductance mechanosensitive channel from Delftia acidovorans (strain DSM 14801 / SPH-1).